The sequence spans 226 residues: Ribonuclease 3 (226 aa).

The region spanning 6–128 is the RNase III domain; sequence INKLQRKLGY…LIGGVFLDSD (123 aa). Residue glutamate 41 coordinates Mg(2+). The active site involves aspartate 45. Positions 114 and 117 each coordinate Mg(2+). The active site involves glutamate 117. In terms of domain architecture, DRBM spans 155–225; that stretch reads DPKTRLQEYL…AEQALIKLGL (71 aa).

It belongs to the ribonuclease III family. In terms of assembly, homodimer. Mg(2+) serves as cofactor.

It localises to the cytoplasm. It carries out the reaction Endonucleolytic cleavage to 5'-phosphomonoester.. Its function is as follows. Digests double-stranded RNA. Involved in the processing of primary rRNA transcript to yield the immediate precursors to the large and small rRNAs (23S and 16S). Processes some mRNAs, and tRNAs when they are encoded in the rRNA operon. Processes pre-crRNA and tracrRNA of type II CRISPR loci if present in the organism. The protein is Ribonuclease 3 (rnc) of Pantoea ananatis (strain LMG 20103).